The sequence spans 227 residues: PKHD-type hydroxylase Caul_0045 (227 aa).

Residues 78–178 form the Fe2OG dioxygenase domain; sequence TILSPLFNRY…RTASFFWIQS (101 aa). Fe cation is bound by residues His-96, Asp-98, and His-159. Residue Arg-169 coordinates 2-oxoglutarate.

The cofactor is Fe(2+). It depends on L-ascorbate as a cofactor.

The sequence is that of PKHD-type hydroxylase Caul_0045 from Caulobacter sp. (strain K31).